The primary structure comprises 209 residues: uncharacterized protein (209 aa).

The N-terminal stretch at 1–17 (MKRLVTGLLALSLFLAA) is a signal peptide. Residues 17–105 (ACGQDSDQQK…SNNQANNNQK (89 aa)) form a disordered region. Residue cysteine 18 is the site of N-palmitoyl cysteine attachment. Cysteine 18 carries S-diacylglycerol cysteine lipidation. A compositionally biased stretch (basic and acidic residues) spans 23–70 (DQQKDSNKEKDDKAKTEQQDEKTNDSSKDKKDKKDDSKDVNKDNKDNS). Over residues 71–105 (ANDNQQQSNSNATNNDQNQTNNNQSSNNQANNNQK) the composition is skewed to low complexity.

Its subcellular location is the cell membrane. This is an uncharacterized protein from Staphylococcus aureus (strain bovine RF122 / ET3-1).